Here is a 681-residue protein sequence, read N- to C-terminus: Glutamine--fructose-6-phosphate aminotransferase [isomerizing] 1 (681 aa).

Cysteine 2 functions as the For GATase activity in the catalytic mechanism. A Glutamine amidotransferase type-2 domain is found at 2-287 (CGIFAYLNYH…DDDVAAVVDG (286 aa)). 2 positions are modified to phosphoserine: serine 103 and serine 243. The interval 295–662 (KRTARDHPGR…LQLLAFHLAV (368 aa)) is isomerase. 2 consecutive SIS domains span residues 359 to 498 (HIKE…DRIS) and 530 to 671 (LATE…VDFP). Residues 376 to 377 (TS), 421 to 423 (SQS), threonine 426, and histidine 577 contribute to the substrate site.

Homotetramer, may also exist as homodimers.

It carries out the reaction D-fructose 6-phosphate + L-glutamine = D-glucosamine 6-phosphate + L-glutamate. It functions in the pathway nucleotide-sugar biosynthesis; UDP-N-acetyl-alpha-D-glucosamine biosynthesis; alpha-D-glucosamine 6-phosphate from D-fructose 6-phosphate: step 1/1. Inhibited by 4,4'-dithiodipyridine. In terms of biological role, controls the flux of glucose into the hexosamine pathway. Most likely involved in regulating the availability of precursors for N- and O-linked glycosylation of proteins. Regulates the circadian expression of clock genes BMAL1 and CRY1. Has a role in fine tuning the metabolic fluctuations of cytosolic UDP-GlcNAc and its effects on hyaluronan synthesis that occur during tissue remodeling. The sequence is that of Glutamine--fructose-6-phosphate aminotransferase [isomerizing] 1 (Gfpt1) from Rattus norvegicus (Rat).